A 107-amino-acid chain; its full sequence is L-rhamnose mutarotase (107 aa).

A substrate-binding site is contributed by tyrosine 21. Histidine 25 serves as the catalytic Proton donor. Residues tyrosine 44 and 79–80 (WW) each bind substrate.

The protein belongs to the rhamnose mutarotase family. Homodimer.

It is found in the cytoplasm. It catalyses the reaction alpha-L-rhamnose = beta-L-rhamnose. It participates in carbohydrate metabolism; L-rhamnose metabolism. Its function is as follows. Involved in the anomeric conversion of L-rhamnose. The chain is L-rhamnose mutarotase from Agrobacterium fabrum (strain C58 / ATCC 33970) (Agrobacterium tumefaciens (strain C58)).